Consider the following 142-residue polypeptide: MKKKKTYGEVYALGQYISMSAPKARRVIDQIRGRSYEETLMLLALMPYRACDPILKLVNSAAANARHNMSFNEATLVISKAEVNEGTTVKKLKPRARGRSYPIRRPTCHIRIVLQDTSFDEFEEDFFSLKKDAWEKKIRTKI.

Belongs to the universal ribosomal protein uL22 family. Part of the 50S ribosomal subunit.

It is found in the plastid. It localises to the chloroplast. In terms of biological role, this protein binds specifically to 23S rRNA. Functionally, the globular domain of the protein is located near the polypeptide exit tunnel on the outside of the subunit, while an extended beta-hairpin is found that lines the wall of the exit tunnel in the center of the 70S ribosome. The chain is Large ribosomal subunit protein uL22c (rpl22) from Oenothera parviflora (Small-flowered evening primrose).